The primary structure comprises 863 residues: Scm-like with four MBT domains protein 1 (863 aa).

4 MBT repeats span residues 20–120 (FSWE…LEAP), 128–232 (SDWS…LQPP), 242–346 (ADWQ…INPP), and 354–451 (FDWA…LSTP). The interval 638–773 (KKKNKRIGRP…SDGENKPPSP (136 aa)) is disordered. Over residues 660-679 (KTSKRRKRRKNIFVHKKKRS) the composition is skewed to basic residues. Residues 680–691 (SASVDNTPVGSP) show a composition bias toward polar residues. Residues 696–710 (GEDEDDADDGDDDSL) show a composition bias toward acidic residues. Phosphoserine is present on residues serine 764 and serine 772. The SAM domain maps to 793–861 (WSVADVVRFI…RIKFAFYEQF (69 aa)).

In terms of assembly, interacts with MYOD1. Component of the SLC (SFMBT1-LSD1-CoREST) corepressor complex, which also contains KDM1A/LSD1 and RCOR1/CoREST. Interacts with KDM1A/LSD1 and RCOR1/CoREST. Interacts with MYOD1. Interacts with L3MBTL3. As to expression, highly expressed in the testis, low expression was detected in brain, kidney, heart and lung.

It localises to the nucleus. Histone-binding protein, which is part of various corepressor complexes. Mediates the recruitment of corepressor complexes to target genes, followed by chromatin compaction and repression of transcription. Plays a role during myogenesis: required for the maintenance of undifferentiated states of myogenic progenitor cells via interaction with MYOD1. Interaction with MYOD1 leads to the recruitment of associated corepressors and silencing of MYOD1 target genes. Part of the SLC complex in germ cells, where it may play a role during spermatogenesis. The protein is Scm-like with four MBT domains protein 1 (Sfmbt1) of Rattus norvegicus (Rat).